The sequence spans 364 residues: RNA polymerase sigma factor SigA (364 aa).

Residues 132–202 are sigma-70 factor domain-2; that stretch reads LAEANLRLVV…TRAIADQART (71 aa). An Interaction with polymerase core subunit RpoC motif is present at residues 156–159; sequence DLIQ. Residues 211 to 287 form a sigma-70 factor domain-3 region; sequence ETINKLIRVQ…DDVIESPVDY (77 aa). The sigma-70 factor domain-4 stretch occupies residues 300–353; it reads VMDTLTDREENVLRMRFGLDDGRMHTLEDVGKQFKVTRERIRQIEAKAIKKLRH. Positions 326-345 form a DNA-binding region, H-T-H motif; that stretch reads LEDVGKQFKVTRERIRQIEA.

The protein belongs to the sigma-70 factor family. RpoD/SigA subfamily. As to quaternary structure, interacts transiently with the RNA polymerase catalytic core.

It is found in the cytoplasm. Its function is as follows. Sigma factors are initiation factors that promote the attachment of RNA polymerase to specific initiation sites and are then released. This sigma factor is the primary sigma factor during exponential growth. This Lactococcus lactis subsp. cremoris (Streptococcus cremoris) protein is RNA polymerase sigma factor SigA.